Consider the following 410-residue polypeptide: Argininosuccinate synthase (410 aa).

Residues 11–19 (AYSGGLDTS) and alanine 37 each bind ATP. Residues tyrosine 88 and serine 93 each coordinate L-citrulline. An ATP-binding site is contributed by 116 to 124 (SHGCTGKGN). L-aspartate is bound by residues threonine 120, asparagine 124, and aspartate 125. Asparagine 124 provides a ligand contact to L-citrulline. Residues arginine 128, serine 181, serine 190, glutamate 269, and tyrosine 281 each contribute to the L-citrulline site.

Belongs to the argininosuccinate synthase family. Type 1 subfamily. As to quaternary structure, homotetramer.

The protein resides in the cytoplasm. It carries out the reaction L-citrulline + L-aspartate + ATP = 2-(N(omega)-L-arginino)succinate + AMP + diphosphate + H(+). Its pathway is amino-acid biosynthesis; L-arginine biosynthesis; L-arginine from L-ornithine and carbamoyl phosphate: step 2/3. This is Argininosuccinate synthase (arg12) from Schizosaccharomyces pombe (strain 972 / ATCC 24843) (Fission yeast).